Reading from the N-terminus, the 406-residue chain is 1-deoxy-D-xylulose 5-phosphate reductoisomerase (406 aa).

NADPH contacts are provided by threonine 21, glycine 22, serine 23, isoleucine 24, glycine 47, glutamine 50, and asparagine 127. Position 128 (lysine 128) interacts with 1-deoxy-D-xylulose 5-phosphate. An NADPH-binding site is contributed by glutamate 129. A Mn(2+)-binding site is contributed by aspartate 151. Residues serine 152, glutamate 153, serine 177, and histidine 200 each coordinate 1-deoxy-D-xylulose 5-phosphate. Residue glutamate 153 coordinates Mn(2+). Glycine 206 is a binding site for NADPH. Serine 213, asparagine 218, lysine 219, and glutamate 222 together coordinate 1-deoxy-D-xylulose 5-phosphate. Glutamate 222 lines the Mn(2+) pocket.

The protein belongs to the DXR family. The cofactor is Mg(2+). Requires Mn(2+) as cofactor.

The enzyme catalyses 2-C-methyl-D-erythritol 4-phosphate + NADP(+) = 1-deoxy-D-xylulose 5-phosphate + NADPH + H(+). Its pathway is isoprenoid biosynthesis; isopentenyl diphosphate biosynthesis via DXP pathway; isopentenyl diphosphate from 1-deoxy-D-xylulose 5-phosphate: step 1/6. Functionally, catalyzes the NADPH-dependent rearrangement and reduction of 1-deoxy-D-xylulose-5-phosphate (DXP) to 2-C-methyl-D-erythritol 4-phosphate (MEP). The protein is 1-deoxy-D-xylulose 5-phosphate reductoisomerase of Mycobacterium leprae (strain Br4923).